The chain runs to 117 residues: G antigen 5 (117 aa).

Residues 1-117 (MSWRGRSTYY…PEEGEKQSQC (117 aa)) are disordered. 2 stretches are compositionally biased toward acidic residues: residues 32–45 (FSDEVEPATPEEGE) and 87–96 (ECEDGPDGQE). Basic and acidic residues predominate over residues 103-117 (EEVKTPEEGEKQSQC).

The protein belongs to the GAGE family. In terms of tissue distribution, expressed in a variety of tumor tissues but not in normal tissues, except testis.

This chain is G antigen 5 (GAGE5), found in Homo sapiens (Human).